The following is a 226-amino-acid chain: ATP synthase F(0) complex subunit a (226 aa).

The next 6 helical transmembrane spans lie at 13-33 (VILG…LISW), 69-89 (WALL…LGLL), 97-117 (TQLS…VIMA), 138-158 (IPVL…ALGV), 179-199 (FVLL…LFLL), and 201-221 (LLEI…LSLY).

It belongs to the ATPase A chain family. As to quaternary structure, component of the ATP synthase complex composed at least of ATP5F1A/subunit alpha, ATP5F1B/subunit beta, ATP5MC1/subunit c (homooctomer), MT-ATP6/subunit a, MT-ATP8/subunit 8, ATP5ME/subunit e, ATP5MF/subunit f, ATP5MG/subunit g, ATP5MK/subunit k, ATP5MJ/subunit j, ATP5F1C/subunit gamma, ATP5F1D/subunit delta, ATP5F1E/subunit epsilon, ATP5PF/subunit F6, ATP5PB/subunit b, ATP5PD/subunit d, ATP5PO/subunit OSCP. ATP synthase complex consists of a soluble F(1) head domain (subunits alpha(3) and beta(3)) - the catalytic core - and a membrane F(0) domain - the membrane proton channel (subunits c, a, 8, e, f, g, k and j). These two domains are linked by a central stalk (subunits gamma, delta, and epsilon) rotating inside the F1 region and a stationary peripheral stalk (subunits F6, b, d, and OSCP). Interacts with DNAJC30; interaction is direct.

It is found in the mitochondrion inner membrane. It carries out the reaction H(+)(in) = H(+)(out). Functionally, subunit a, of the mitochondrial membrane ATP synthase complex (F(1)F(0) ATP synthase or Complex V) that produces ATP from ADP in the presence of a proton gradient across the membrane which is generated by electron transport complexes of the respiratory chain. ATP synthase complex consist of a soluble F(1) head domain - the catalytic core - and a membrane F(1) domain - the membrane proton channel. These two domains are linked by a central stalk rotating inside the F(1) region and a stationary peripheral stalk. During catalysis, ATP synthesis in the catalytic domain of F(1) is coupled via a rotary mechanism of the central stalk subunits to proton translocation. With the subunit c (ATP5MC1), forms the proton-conducting channel in the F(0) domain, that contains two crucial half-channels (inlet and outlet) that facilitate proton movement from the mitochondrial intermembrane space (IMS) into the matrix. Protons are taken up via the inlet half-channel and released through the outlet half-channel, following a Grotthuss mechanism. The chain is ATP synthase F(0) complex subunit a from Xenopus laevis (African clawed frog).